The primary structure comprises 83 residues: uncharacterized protein (83 aa).

Residues 1-20 (MRRALTLAVLATCAVLPALA) form the signal peptide.

The protein to P.denitrificans and M.extorquens MoxJ.

This is an uncharacterized protein from Paracoccus denitrificans.